The primary structure comprises 531 residues: Putative UDP-glucuronosyltransferase ugt-46 (531 aa).

The N-terminal stretch at 1–17 is a signal peptide; it reads MRLIFVLLATFVNAAFS. The N-linked (GlcNAc...) asparagine glycan is linked to N304. The chain crosses the membrane as a helical span at residues 493–513; the sequence is VIIPVFWLSISLVIPTIFGWY.

Belongs to the UDP-glycosyltransferase family.

The protein resides in the membrane. The catalysed reaction is glucuronate acceptor + UDP-alpha-D-glucuronate = acceptor beta-D-glucuronoside + UDP + H(+). This is Putative UDP-glucuronosyltransferase ugt-46 (ugt-46) from Caenorhabditis elegans.